Reading from the N-terminus, the 360-residue chain is Flavone O-methyltransferase 1 (360 aa).

127 to 133 (MNQDKVL) serves as a coordination point for substrate. The interval 159–177 (AFEYHGTDPRFNRVFNEGM) is substrate binding. G205, D228, D248, M249, and K262 together coordinate S-adenosyl-L-methionine. H266 acts as the Proton acceptor in catalysis.

The protein belongs to the class I-like SAM-binding methyltransferase superfamily. Cation-independent O-methyltransferase family. COMT subfamily. As to quaternary structure, homodimer.

Its function is as follows. Flavone-specific O-methyltransferase with a preference for flavones &gt; flavonols. Active with tricetin, luteolin, quercitin and eriodictyol. Very low activity with phenylpropanoids (5-hydroxyferulic acid and caffeic acid). Catalyzes the sequential O-methylation of tricetin via 3'-O-methyltricetin, 3',5'-O-methyltricetin to 3',4',5'-O-trimethyltricetin. The protein is Flavone O-methyltransferase 1 (OMT1) of Triticum aestivum (Wheat).